A 482-amino-acid chain; its full sequence is Aspartyl/glutamyl-tRNA(Asn/Gln) amidotransferase subunit B (482 aa).

The protein belongs to the GatB/GatE family. GatB subfamily. As to quaternary structure, heterotrimer of A, B and C subunits.

The enzyme catalyses L-glutamyl-tRNA(Gln) + L-glutamine + ATP + H2O = L-glutaminyl-tRNA(Gln) + L-glutamate + ADP + phosphate + H(+). The catalysed reaction is L-aspartyl-tRNA(Asn) + L-glutamine + ATP + H2O = L-asparaginyl-tRNA(Asn) + L-glutamate + ADP + phosphate + 2 H(+). Its function is as follows. Allows the formation of correctly charged Asn-tRNA(Asn) or Gln-tRNA(Gln) through the transamidation of misacylated Asp-tRNA(Asn) or Glu-tRNA(Gln) in organisms which lack either or both of asparaginyl-tRNA or glutaminyl-tRNA synthetases. The reaction takes place in the presence of glutamine and ATP through an activated phospho-Asp-tRNA(Asn) or phospho-Glu-tRNA(Gln). In Azotobacter vinelandii (strain DJ / ATCC BAA-1303), this protein is Aspartyl/glutamyl-tRNA(Asn/Gln) amidotransferase subunit B.